Reading from the N-terminus, the 530-residue chain is Vesicular acetylcholine transporter (530 aa).

The Cytoplasmic portion of the chain corresponds to 1–33; that stretch reads MEPTAPTGQARAAATKLSEAVGAALQEPQRQRR. A helical transmembrane segment spans residues 34–54; that stretch reads LVLVIVCVALLLDNMLYMVIV. Residues 55–125 lie on the Lumenal, vesicle side of the membrane; the sequence is PIVPDYIAHM…PTESEDVKIG (71 aa). 2 N-linked (GlcNAc...) asparagine glycosylation sites follow: asparagine 89 and asparagine 96. A helical membrane pass occupies residues 126–146; sequence VLFASKAILQLLVNPLSGPFI. At 147–152 the chain is on the cytoplasmic side; the sequence is DRMSYD. Residues 153–173 traverse the membrane as a helical segment; sequence VPLLIGLGVMFASTVMFAFAE. Over 174 to 182 the chain is Lumenal, vesicle; the sequence is DYATLFAAR. Residues 183 to 203 traverse the membrane as a helical segment; that stretch reads SLQGLGSAFADTSGIAMIADK. The Cytoplasmic segment spans residues 204 to 213; the sequence is YPEEPERSRA. Residues 214 to 234 traverse the membrane as a helical segment; sequence LGVALAFISFGSLVAPPFGGI. The Lumenal, vesicle segment spans residues 235–242; the sequence is LYEFAGKR. Residues 243-263 form a helical membrane-spanning segment; it reads VPFLVLAAVSLFDALLLLAVA. Residues 264–289 lie on the Cytoplasmic side of the membrane; the sequence is KPFSAAARARANLPVGTPIHRLMLDP. The chain crosses the membrane as a helical span at residues 290 to 310; the sequence is YIAVVAGALTTCNIPLAFLEP. The Lumenal, vesicle segment spans residues 311–325; that stretch reads TIATWMKHTMAASEW. Residues 326–346 form a helical membrane-spanning segment; it reads EMGMVWLPAFVPHVLGVYLTV. At 347–356 the chain is on the cytoplasmic side; the sequence is RLAARYPHLQ. The chain crosses the membrane as a helical span at residues 357–377; that stretch reads WLYGALGLAVIGVSSCVVPAC. At 378–388 the chain is on the lumenal, vesicle side; the sequence is RSFAPLVVSLC. The helical transmembrane segment at 389-409 threads the bilayer; that stretch reads GLCFGIALVDTALLPTLAFLV. The Cytoplasmic segment spans residues 410-422; that stretch reads DVRHVSVYGSVYA. The helical transmembrane segment at 423-443 threads the bilayer; it reads IADISYSVAYALGPIVAGHIV. Residues 444–447 are Lumenal, vesicle-facing; it reads HSLG. A helical membrane pass occupies residues 448–468; the sequence is FEQLSLGMGLANLLYAPVLLL. Residues 469–530 lie on the Cytoplasmic side of the membrane; the sequence is LRNVGLLTRS…EDDYNYYSRS (62 aa). The mediates interaction with SEC14L1 stretch occupies residues 471–530; that stretch reads NVGLLTRSRSERDVLLDEPPQGLYDAVRLREVQGKDGGEPCSPPGPFDGCEDDYNYYSRS. The disordered stretch occupies residues 504–530; it reads GKDGGEPCSPPGPFDGCEDDYNYYSRS.

The protein belongs to the major facilitator superfamily. Vesicular transporter family. In terms of assembly, interacts with SEC14L1. High expression in all major cholinergic cell groups, including peripheral postganglionic parasympathetic cells, preganglionic sympathetic and parasympathetic cells, ventral spinal cord and brainstem motoneurons, cell groups in the basal forebrain, the habenula and the corpus striatum. Weakly expressed in the cortex and hippocampus.

It is found in the cytoplasmic vesicle. The protein localises to the secretory vesicle. The protein resides in the synaptic vesicle membrane. It catalyses the reaction acetylcholine(out) + 2 H(+)(in) = acetylcholine(in) + 2 H(+)(out). The enzyme catalyses choline(in) + 2 H(+)(out) = choline(out) + 2 H(+)(in). The catalysed reaction is serotonin(in) + 2 H(+)(out) = serotonin(out) + 2 H(+)(in). With respect to regulation, potently inhibited by L-vesamicol. Its function is as follows. Electrogenic antiporter that exchanges one cholinergic neurotransmitter, acetylcholine or choline, with two intravesicular protons across the membrane of synaptic vesicles. Uses the electrochemical proton gradient established by the V-type proton-pump ATPase to store neurotransmitters inside the vesicles prior to their release via exocytosis. Determines cholinergic vesicular quantal size at presynaptic nerve terminals in developing neuro-muscular junctions with an impact on motor neuron differentiation and innervation pattern. Part of forebrain cholinergic system, regulates hippocampal synapse transmissions that underlie spatial memory formation. Can transport serotonin. This is Vesicular acetylcholine transporter (Slc18a3) from Rattus norvegicus (Rat).